The chain runs to 727 residues: ATP-dependent RNA helicase DBP7 (727 aa).

The segment at 14–119 (PDTSSVAASK…TSHLAPTSTT (106 aa)) is disordered. Residues 15 to 28 (DTSSVAASKNQNVK) show a composition bias toward polar residues. Residues 63–94 (DESKRKRDSEDKVQLDSNKRSKFTESKGENGG) are compositionally biased toward basic and acidic residues. The span at 99 to 119 (YVSSLFTNNQPTSHLAPTSTT) shows a compositional bias: polar residues. The Q motif motif lies at 135–164 (TNFSGLGLNEKLSIHLTDHLRFMHPTKIQQ). The 196-residue stretch at 168 to 363 (PSLISTENDL…SIVLKDPEMI (196 aa)) folds into the Helicase ATP-binding domain. 181-188 (AQTGSGKT) lines the ATP pocket. A DEAD box motif is present at residues 295 to 298 (DEGD). Positions 406 to 613 (TLDALLLKIS…NIKSKDNKLG (208 aa)) constitute a Helicase C-terminal domain. Positions 683 to 727 (KKLGKSVGNNSNYSESKKGKKEDPRKKMLRMAKMAVKSASSEFNY) are disordered. Basic and acidic residues predominate over residues 697–708 (ESKKGKKEDPRK).

Belongs to the DEAD box helicase family. DDX31/DBP7 subfamily.

Its subcellular location is the nucleus. The protein resides in the nucleolus. The enzyme catalyses ATP + H2O = ADP + phosphate + H(+). In terms of biological role, ATP-binding RNA helicase involved in the biogenesis of 60S ribosomal subunits and is required for the normal formation of 25S and 5.8S rRNAs. This chain is ATP-dependent RNA helicase DBP7 (DBP7), found in Candida albicans (strain SC5314 / ATCC MYA-2876) (Yeast).